We begin with the raw amino-acid sequence, 549 residues long: MFS-type transporter TwmF (549 aa).

4 consecutive transmembrane segments (helical) span residues 29 to 49, 63 to 83, 99 to 119, and 126 to 146; these read IVIG…VLTI, NFIW…PLFG, VAIF…AMLI, and GVGS…LVPL. N-linked (GlcNAc...) asparagine glycosylation occurs at Asn-151. The next 10 helical transmembrane spans lie at 155-175, 182-202, 221-241, 249-269, 291-311, 328-348, 355-375, 390-410, 421-441, and 502-522; these read ILMS…GAIV, WVFY…FIFL, LVGN…LSYA, SWHT…FAGL, IILA…LFFL, VALL…AIAL, KPVH…FTLF, IVAF…QAFI, AWYF…AAIF, and VSIA…DVGL.

This sequence belongs to the major facilitator superfamily.

The protein localises to the membrane. MFS efflux transporter; part of the gene cluster that mediates the biosynthesis of wortmanamides A and B, reduced long-chain polyketides amidated with a specific omega-amino acid, 5-aminopentanoic acid (5PA). The polypeptide is MFS-type transporter TwmF (Talaromyces wortmannii (Penicillium wortmannii)).